Here is a 197-residue protein sequence, read N- to C-terminus: GTP cyclohydrolase-2 (197 aa).

50-54 is a GTP binding site; sequence RIHSE. Residues C55, C66, and C68 each coordinate Zn(2+). GTP-binding positions include Q71, 93-95, and T115; that span reads EGR. Catalysis depends on D127, which acts as the Proton acceptor. R129 serves as the catalytic Nucleophile. 2 residues coordinate GTP: T150 and K155.

The protein belongs to the GTP cyclohydrolase II family. The cofactor is Zn(2+).

It catalyses the reaction GTP + 4 H2O = 2,5-diamino-6-hydroxy-4-(5-phosphoribosylamino)-pyrimidine + formate + 2 phosphate + 3 H(+). It participates in cofactor biosynthesis; riboflavin biosynthesis; 5-amino-6-(D-ribitylamino)uracil from GTP: step 1/4. In terms of biological role, catalyzes the conversion of GTP to 2,5-diamino-6-ribosylamino-4(3H)-pyrimidinone 5'-phosphate (DARP), formate and pyrophosphate. This is GTP cyclohydrolase-2 from Neisseria gonorrhoeae (strain ATCC 700825 / FA 1090).